Reading from the N-terminus, the 281-residue chain is MLLEFTKMHGLGNDFMVVDLISQRAYLDTATIQRLADRHFGVGFDQLLIVEPPDVPEADFKYRIFNADGSEVEQCGNGVRCFARFVHERHLTNKTNITVQTKAGIVKPELGQNGWVRVNMGYPKFLPNEIPFVADEPEALYTLELANDQNISIDVVNMGNPHAVTIVPDVLTADVAGIGPQVELHKRFPERVNAGFMQVIDDKHVRLRVFERGVGETLACGTGACAAAVSGMRRGLLANSVEVELAGGKLQIEWQEGDVVWMTGPTTHVYDGRLDLRYFQG.

Residues asparagine 13, glutamine 46, and asparagine 66 each contribute to the substrate site. The active-site Proton donor is cysteine 75. Substrate-binding positions include 76–77 (GN), asparagine 160, asparagine 193, and 211–212 (ER). Catalysis depends on cysteine 220, which acts as the Proton acceptor. 221–222 (GT) lines the substrate pocket.

It belongs to the diaminopimelate epimerase family. As to quaternary structure, homodimer.

Its subcellular location is the cytoplasm. It catalyses the reaction (2S,6S)-2,6-diaminopimelate = meso-2,6-diaminopimelate. It functions in the pathway amino-acid biosynthesis; L-lysine biosynthesis via DAP pathway; DL-2,6-diaminopimelate from LL-2,6-diaminopimelate: step 1/1. In terms of biological role, catalyzes the stereoinversion of LL-2,6-diaminopimelate (L,L-DAP) to meso-diaminopimelate (meso-DAP), a precursor of L-lysine and an essential component of the bacterial peptidoglycan. This chain is Diaminopimelate epimerase, found in Acinetobacter baumannii (strain ATCC 17978 / DSM 105126 / CIP 53.77 / LMG 1025 / NCDC KC755 / 5377).